The primary structure comprises 197 residues: Inosine triphosphate pyrophosphatase (197 aa).

An ITP-binding site is contributed by Thr-10–Lys-15. Residue Glu-45 participates in Mg(2+) binding. ITP contacts are provided by residues Lys-58, Asp-76–Thr-77, Lys-93, Phe-151–Asp-154, Lys-175, and His-180–Arg-181.

Belongs to the HAM1 NTPase family. Homodimer. Mg(2+) is required as a cofactor. It depends on Mn(2+) as a cofactor.

It localises to the cytoplasm. The protein resides in the nucleus. It catalyses the reaction ITP + H2O = IMP + diphosphate + H(+). The catalysed reaction is dITP + H2O = dIMP + diphosphate + H(+). The enzyme catalyses XTP + H2O = XMP + diphosphate + H(+). It carries out the reaction N(6)-hydroxy-dATP + H2O = N(6)-hydroxy-dAMP + diphosphate + H(+). Its function is as follows. Pyrophosphatase that hydrolyzes the non-canonical purine nucleotides inosine triphosphate (ITP), deoxyinosine triphosphate (dITP) as well as 2'-deoxy-N-6-hydroxylaminopurine triphosphate (dHAPTP) and 5-bromodeoxyuridine 5'-triphosphate (BrdUTP) to their respective monophosphate derivatives. Xanthosine 5'-triphosphate (XTP) is also a potential substrate. The enzyme does not distinguish between the deoxy- and ribose forms. Probably excludes non-canonical purines from RNA and DNA precursor pools, thus preventing their incorporation into RNA and DNA and avoiding chromosomal lesions. The polypeptide is Inosine triphosphate pyrophosphatase (Saccharomyces cerevisiae (strain ATCC 204508 / S288c) (Baker's yeast)).